A 223-amino-acid polypeptide reads, in one-letter code: Expansin-B6 (223 aa).

The 109-residue stretch at 16-124 (GGACGFAVAN…RRVECLYRRT (109 aa)) folds into the Expansin-like EG45 domain. Intrachain disulfides connect Cys-19/Cys-46, Cys-49/Cys-119, and Cys-54/Cys-60. The Expansin-like CBD domain occupies 137 to 218 (YYISFVVEYE…NWKPNETYRS (82 aa)). N-linked (GlcNAc...) asparagine glycosylation is present at Asn-213.

Belongs to the expansin family. Expansin B subfamily.

The protein resides in the secreted. It localises to the cell wall. Its subcellular location is the membrane. In terms of biological role, may cause loosening and extension of plant cell walls by disrupting non-covalent bonding between cellulose microfibrils and matrix glucans. The chain is Expansin-B6 from Arabidopsis thaliana (Mouse-ear cress).